Consider the following 485-residue polypeptide: Glutamyl-tRNA(Gln) amidotransferase subunit A (485 aa).

Catalysis depends on charge relay system residues lysine 78 and serine 153. The active-site Acyl-ester intermediate is serine 177.

This sequence belongs to the amidase family. GatA subfamily. As to quaternary structure, heterotrimer of A, B and C subunits.

The enzyme catalyses L-glutamyl-tRNA(Gln) + L-glutamine + ATP + H2O = L-glutaminyl-tRNA(Gln) + L-glutamate + ADP + phosphate + H(+). Its function is as follows. Allows the formation of correctly charged Gln-tRNA(Gln) through the transamidation of misacylated Glu-tRNA(Gln) in organisms which lack glutaminyl-tRNA synthetase. The reaction takes place in the presence of glutamine and ATP through an activated gamma-phospho-Glu-tRNA(Gln). This is Glutamyl-tRNA(Gln) amidotransferase subunit A from Geotalea daltonii (strain DSM 22248 / JCM 15807 / FRC-32) (Geobacter daltonii).